A 440-amino-acid polypeptide reads, in one-letter code: Light-independent protochlorophyllide reductase subunit B (440 aa).

Asp-36 serves as a coordination point for [4Fe-4S] cluster. 427–428 (KD) contributes to the substrate binding site.

Belongs to the ChlB/BchB/BchZ family. In terms of assembly, protochlorophyllide reductase is composed of three subunits; ChlL, ChlN and ChlB. Forms a heterotetramer of two ChlB and two ChlN subunits. [4Fe-4S] cluster serves as cofactor.

It is found in the plastid. The protein localises to the cyanelle. The catalysed reaction is chlorophyllide a + oxidized 2[4Fe-4S]-[ferredoxin] + 2 ADP + 2 phosphate = protochlorophyllide a + reduced 2[4Fe-4S]-[ferredoxin] + 2 ATP + 2 H2O. It functions in the pathway porphyrin-containing compound metabolism; chlorophyll biosynthesis (light-independent). In terms of biological role, component of the dark-operative protochlorophyllide reductase (DPOR) that uses Mg-ATP and reduced ferredoxin to reduce ring D of protochlorophyllide (Pchlide) to form chlorophyllide a (Chlide). This reaction is light-independent. The NB-protein (ChlN-ChlB) is the catalytic component of the complex. In Cyanophora paradoxa, this protein is Light-independent protochlorophyllide reductase subunit B.